The chain runs to 178 residues: DNA-directed RNA polymerase V subunit 7 (178 aa).

It belongs to the eukaryotic RPB7/RPC8 RNA polymerase subunit family. In terms of assembly, component of the RNA polymerase V complex.

It localises to the nucleus. In terms of biological role, DNA-dependent RNA polymerase catalyzes the transcription of DNA into RNA using the four ribonucleoside triphosphates as substrates. Component of RNA polymerase V involved in RNA-directed DNA methylation-dependent (RdDM) silencing of endogenous repeated sequences, including transposable elements. This Arabidopsis thaliana (Mouse-ear cress) protein is DNA-directed RNA polymerase V subunit 7 (NRPE7).